We begin with the raw amino-acid sequence, 91 residues long: Early E3B 10.4 kDa protein (91 aa).

The N-terminal stretch at 1 to 22 is a signal peptide; sequence MIPRVLILLTLVALFCACSTLA. Topologically, residues 23 to 34 are lumenal; that stretch reads AVAHIEVDCIPP. Residues 35 to 60 traverse the membrane as a helical segment; that stretch reads FTVYLLYGFVTLILICSLVTVVIAFI. The Cytoplasmic segment spans residues 61–91; the sequence is QFIDWICVRIAYLRHHPQYRDRTIADLLRIL.

Belongs to the adenoviridae E3B family.

The protein localises to the host endoplasmic reticulum membrane. Its function is as follows. Down-regulates the EGF receptor. In Homo sapiens (Human), this protein is Early E3B 10.4 kDa protein.